The primary structure comprises 172 residues: Cytidylate kinase (172 aa).

7-15 (GLAGTGTTT) is an ATP binding site.

The protein belongs to the cytidylate kinase family. Type 2 subfamily.

The protein localises to the cytoplasm. The enzyme catalyses CMP + ATP = CDP + ADP. It carries out the reaction dCMP + ATP = dCDP + ADP. This chain is Cytidylate kinase, found in Methanobrevibacter smithii (strain ATCC 35061 / DSM 861 / OCM 144 / PS).